Reading from the N-terminus, the 150-residue chain is Photosystem II extrinsic protein V (150 aa).

The N-terminal stretch at 1 to 20 (MIRVIMLLVLVWMTPMISWA) is a signal peptide. The heme c site is built by cysteine 50, cysteine 53, histidine 54, and histidine 105.

The protein belongs to the cytochrome c family. PsbV subfamily. In terms of assembly, PSII is composed of 1 copy each of membrane proteins PsbA, PsbB, PsbC, PsbD, PsbE, PsbF, PsbH, PsbI, PsbJ, PsbK, PsbL, PsbM, PsbT, PsbY, PsbZ, Psb30/Ycf12, at least 3 peripheral proteins of the oxygen-evolving complex and a large number of cofactors. It forms dimeric complexes. The extrinsic subunits in red algae are PsbO (OEC33), PsbQ', cytochrome c-550 and PsbU. Heme c serves as cofactor.

The protein resides in the plastid. The protein localises to the chloroplast thylakoid membrane. Functionally, one of the extrinsic, lumenal subunits of photosystem II (PSII). PSII is a light-driven water plastoquinone oxidoreductase, using light energy to abstract electrons from H(2)O, generating a proton gradient subsequently used for ATP formation. The extrinsic proteins stabilize the structure of photosystem II oxygen-evolving complex (OEC), the ion environment of oxygen evolution and protect the OEC against heat-induced inactivation. In Cyanidioschyzon merolae (strain NIES-3377 / 10D) (Unicellular red alga), this protein is Photosystem II extrinsic protein V.